We begin with the raw amino-acid sequence, 234 residues long: NLP effector protein 1 (234 aa).

Positions 1–18 (MQLRAFISVFASLACVNA) are cleaved as a signal peptide. N-linked (GlcNAc...) asparagine glycosylation is present at Asn66. Positions 102-112 (AFMYSWYMPKD) match the Conserved undecapeptide motif I motif. The Hepta-peptide GHRHDWE motif II signature appears at 119-125 (GHRHDWE).

Belongs to the Necrosis inducing protein (NPP1) family.

It localises to the secreted. In terms of biological role, secreted effector that contributes to virulence during infection by P.capsici. Induces distinct chlorosis at 3 days after inoculation of host C.annuum leaves, and all the chlorotic areas gradually turn brown and become moderately necrotic at 7 days after inoculation. Leads only to chlorotic areas, without necrosis at 7 days after non-host N.benthamiana leaves infection. Induces cell death in hot pepper. This is NLP effector protein 1 from Phytophthora capsici.